The sequence spans 161 residues: Ribosome maturation factor RimP (161 aa).

It belongs to the RimP family.

It is found in the cytoplasm. Functionally, required for maturation of 30S ribosomal subunits. This Herminiimonas arsenicoxydans protein is Ribosome maturation factor RimP.